The following is a 170-amino-acid chain: Large ribosomal subunit protein uL10 (170 aa).

The protein belongs to the universal ribosomal protein uL10 family. As to quaternary structure, part of the ribosomal stalk of the 50S ribosomal subunit. The N-terminus interacts with L11 and the large rRNA to form the base of the stalk. The C-terminus forms an elongated spine to which L12 dimers bind in a sequential fashion forming a multimeric L10(L12)X complex.

Functionally, forms part of the ribosomal stalk, playing a central role in the interaction of the ribosome with GTP-bound translation factors. The chain is Large ribosomal subunit protein uL10 from Lactobacillus acidophilus (strain ATCC 700396 / NCK56 / N2 / NCFM).